The primary structure comprises 117 residues: Large ribosomal subunit protein bL20c (117 aa).

It belongs to the bacterial ribosomal protein bL20 family.

It is found in the plastid. The protein resides in the chloroplast. In terms of biological role, binds directly to 23S ribosomal RNA and is necessary for the in vitro assembly process of the 50S ribosomal subunit. It is not involved in the protein synthesizing functions of that subunit. This is Large ribosomal subunit protein bL20c from Lemna minor (Common duckweed).